The sequence spans 276 residues: Undecaprenyl-diphosphatase 2 (276 aa).

8 helical membrane passes run 4-24 (IEAL…VSSL), 44-64 (DFLP…LIYF), 87-107 (ARLM…GLLL), 114-134 (LFAS…LLLW), 150-170 (LSFA…LPGF), 193-213 (FSFL…IPKL), 225-245 (LLLA…WFLM), and 256-276 (LRPF…FKLV).

Belongs to the UppP family.

It localises to the cell inner membrane. The enzyme catalyses di-trans,octa-cis-undecaprenyl diphosphate + H2O = di-trans,octa-cis-undecaprenyl phosphate + phosphate + H(+). Functionally, catalyzes the dephosphorylation of undecaprenyl diphosphate (UPP). Confers resistance to bacitracin. The sequence is that of Undecaprenyl-diphosphatase 2 from Chromobacterium violaceum (strain ATCC 12472 / DSM 30191 / JCM 1249 / CCUG 213 / NBRC 12614 / NCIMB 9131 / NCTC 9757 / MK).